Reading from the N-terminus, the 379-residue chain is Cytochrome b (379 aa).

4 helical membrane passes run phenylalanine 33–methionine 53, tryptophan 77–valine 98, tryptophan 113–leucine 133, and phenylalanine 178–leucine 198. Heme b contacts are provided by histidine 83 and histidine 97. Histidine 182 and histidine 196 together coordinate heme b. Histidine 201 is an a ubiquinone binding site. A run of 4 helical transmembrane segments spans residues threonine 226 to tyrosine 246, leucine 288 to glutamine 308, leucine 320 to glycine 340, and phenylalanine 347 to proline 367.

The protein belongs to the cytochrome b family. As to quaternary structure, the cytochrome bc1 complex contains 11 subunits: 3 respiratory subunits (MT-CYB, CYC1 and UQCRFS1), 2 core proteins (UQCRC1 and UQCRC2) and 6 low-molecular weight proteins (UQCRH/QCR6, UQCRB/QCR7, UQCRQ/QCR8, UQCR10/QCR9, UQCR11/QCR10 and a cleavage product of UQCRFS1). This cytochrome bc1 complex then forms a dimer. Heme b serves as cofactor.

It is found in the mitochondrion inner membrane. In terms of biological role, component of the ubiquinol-cytochrome c reductase complex (complex III or cytochrome b-c1 complex) that is part of the mitochondrial respiratory chain. The b-c1 complex mediates electron transfer from ubiquinol to cytochrome c. Contributes to the generation of a proton gradient across the mitochondrial membrane that is then used for ATP synthesis. This is Cytochrome b (MT-CYB) from Lepilemur dorsalis (Grey-backed sportive lemur).